A 317-amino-acid polypeptide reads, in one-letter code: Apolipoprotein E (317 aa).

Positions 1-18 (MKVLWVALVITLLAGCQA) are cleaved as a signal peptide. 8 repeat units span residues 80–101 (VLMD…EQLG), 102–123 (PVAQ…ARLA), 124–145 (SDMQ…AMMG), 146–167 (HTTD…KRLL), 168–189 (RDAE…EGSE), 190–211 (RSVS…ARAA), 212–233 (TVGT…QKLR), and 234–255 (GRVE…EQLD). Positions 80-255 (VLMDETMKEV…HLEEMREQLD (176 aa)) are 8 X 22 AA approximate tandem repeats. M143 carries the methionine sulfoxide modification. The segment at 158–168 (HLRKLRKRLLR) is LDL and other lipoprotein receptors binding. 162–165 (LRKR) provides a ligand contact to heparin. The interval 210 to 290 (AATVGTLASQ…SWFEPLVEDM (81 aa)) is lipid-binding and lipoprotein association. 229 to 236 (HQKLRGRV) is a binding site for heparin. Residues 266-317 (TQMRLQAEAFQARLKSWFEPLVEDMQRQWAGLVEKVQLAMATSSTSAPSENH) are homooligomerization. The interval 278-290 (RLKSWFEPLVEDM) is specificity for association with VLDL.

The protein belongs to the apolipoprotein A1/A4/E family. As to quaternary structure, homotetramer. May interact with ABCA1; functionally associated with ABCA1 in the biogenesis of HDLs. May interact with APP/A4 amyloid-beta peptide; the interaction is extremely stable in vitro but its physiological significance is unclear. May interact with MAPT. May interact with MAP2. In the cerebrospinal fluid, interacts with secreted SORL1. Interacts with PMEL; this allows the loading of PMEL luminal fragment on ILVs to induce fibril nucleation. In terms of processing, APOE exists as multiple glycosylated and sialylated glycoforms within cells and in plasma. The extent of glycosylation and sialylation are tissue and context specific. Glycated in plasma VLDL. Post-translationally, phosphorylated by FAM20C in the extracellular medium.

It is found in the secreted. It localises to the extracellular space. Its subcellular location is the extracellular matrix. The protein localises to the extracellular vesicle. The protein resides in the endosome. It is found in the multivesicular body. APOE is an apolipoprotein, a protein associating with lipid particles, that mainly functions in lipoprotein-mediated lipid transport between organs via the plasma and interstitial fluids. APOE is a core component of plasma lipoproteins and is involved in their production, conversion and clearance. Apolipoproteins are amphipathic molecules that interact both with lipids of the lipoprotein particle core and the aqueous environment of the plasma. As such, APOE associates with chylomicrons, chylomicron remnants, very low density lipoproteins (VLDL) and intermediate density lipoproteins (IDL) but shows a preferential binding to high-density lipoproteins (HDL). It also binds a wide range of cellular receptors including the LDL receptor/LDLR and the very low-density lipoprotein receptor/VLDLR that mediate the cellular uptake of the APOE-containing lipoprotein particles. Finally, APOE also has a heparin-binding activity and binds heparan-sulfate proteoglycans on the surface of cells, a property that supports the capture and the receptor-mediated uptake of APOE-containing lipoproteins by cells. The protein is Apolipoprotein E (APOE) of Physeter macrocephalus (Sperm whale).